The primary structure comprises 459 residues: MNRLPSSASALACSAHALNLIEKRTLDHEEMKALNREVIKYFKEHVNPGFLEYRKSVTAGGDYGAVEWQAGSLNTLVDTQGQEFIDCLGGFGIFNVGHRNPVVVSAVQNQLAKQPLHSQELLDPLRAMLAKTLAALTPGKLKYSFFCNSGTESVEAALKLAKAYQSPRGKFTFIATSGAFHGKSLGALSATAKSTFRKPFMPLLPGFRHVPFGNIEAMRTALNECKKTGDDVAAVILEPIQGEGGVILPPPGYLTAVRKLCDEFGALMILDEVQTGMGRTGKMFACEHENVQPDILCLAKALGGGVMPIGATIATEEVFSVLFDNPFLHTTTFGGNPLACAAALATINVLLEQNLPAQAEQKGDMLLDGFRQLAREYPDLVQEARGKGMLMAIEFVDNEIGYNFASEMFRQRVLVAGTLNNAKTIRIEPPLTLTIEQCELVIKAARKALAAMRVSVEEA.

Pyridoxal 5'-phosphate-binding positions include 150–151 and Gln-274; that span reads GT. Residue Lys-300 is modified to N6-(pyridoxal phosphate)lysine. Position 332 (Thr-332) interacts with pyridoxal 5'-phosphate.

The protein belongs to the class-III pyridoxal-phosphate-dependent aminotransferase family. Putrescine aminotransferase subfamily. Pyridoxal 5'-phosphate serves as cofactor.

It catalyses the reaction an alkane-alpha,omega-diamine + 2-oxoglutarate = an omega-aminoaldehyde + L-glutamate. The catalysed reaction is putrescine + 2-oxoglutarate = 1-pyrroline + L-glutamate + H2O. The enzyme catalyses cadaverine + 2-oxoglutarate = 5-aminopentanal + L-glutamate. The protein operates within amine and polyamine degradation; putrescine degradation; 4-aminobutanal from putrescine (transaminase route): step 1/1. Functionally, catalyzes the aminotransferase reaction from putrescine to 2-oxoglutarate, leading to glutamate and 4-aminobutanal, which spontaneously cyclizes to form 1-pyrroline. This is the first step in one of two pathways for putrescine degradation, where putrescine is converted into 4-aminobutanoate (gamma-aminobutyrate or GABA) via 4-aminobutanal. Also functions as a cadaverine transaminase in a a L-lysine degradation pathway to succinate that proceeds via cadaverine, glutarate and L-2-hydroxyglutarate. In Escherichia coli O9:H4 (strain HS), this protein is Putrescine aminotransferase.